The following is a 38-amino-acid chain: Photosystem II reaction center protein L (38 aa).

Residues 17–37 traverse the membrane as a helical segment; the sequence is SLYWGLLLIFVLAVLFSSYFF.

The protein belongs to the PsbL family. PSII is composed of 1 copy each of membrane proteins PsbA, PsbB, PsbC, PsbD, PsbE, PsbF, PsbH, PsbI, PsbJ, PsbK, PsbL, PsbM, PsbT, PsbX, PsbY, PsbZ, Psb30/Ycf12, at least 3 peripheral proteins of the oxygen-evolving complex and a large number of cofactors. It forms dimeric complexes.

Its subcellular location is the plastid. The protein localises to the chloroplast thylakoid membrane. Functionally, one of the components of the core complex of photosystem II (PSII). PSII is a light-driven water:plastoquinone oxidoreductase that uses light energy to abstract electrons from H(2)O, generating O(2) and a proton gradient subsequently used for ATP formation. It consists of a core antenna complex that captures photons, and an electron transfer chain that converts photonic excitation into a charge separation. This subunit is found at the monomer-monomer interface and is required for correct PSII assembly and/or dimerization. In Thalassiosira pseudonana (Marine diatom), this protein is Photosystem II reaction center protein L.